The chain runs to 36 residues: Photosystem I reaction center subunit VIII (36 aa).

Residues 10-30 (FVPLVGLVFSAIIMVLSFLYI) form a helical membrane-spanning segment.

It belongs to the PsaI family.

The protein localises to the plastid. It localises to the chloroplast thylakoid membrane. May help in the organization of the PsaL subunit. The protein is Photosystem I reaction center subunit VIII of Welwitschia mirabilis (Tree tumbo).